Consider the following 182-residue polypeptide: Small ribosomal subunit protein uS4 (182 aa).

Disordered regions lie at residues 1–23 (MGHPKKPRKQYDTPSHPWNADRI) and 158–182 (SSVAKQFETQETEEVAAEEEPKDEE). An S4 RNA-binding domain is found at 103-170 (RRLQSLVFKR…AKQFETQETE (68 aa)). Positions 167–182 (QETEEVAAEEEPKDEE) are enriched in acidic residues.

This sequence belongs to the universal ribosomal protein uS4 family. In terms of assembly, part of the 30S ribosomal subunit. Contacts protein S5. The interaction surface between S4 and S5 is involved in control of translational fidelity.

Functionally, one of the primary rRNA binding proteins, it binds directly to 16S rRNA where it nucleates assembly of the body of the 30S subunit. With S5 and S12 plays an important role in translational accuracy. This chain is Small ribosomal subunit protein uS4, found in Methanosphaera stadtmanae (strain ATCC 43021 / DSM 3091 / JCM 11832 / MCB-3).